The following is a 653-amino-acid chain: TRAF3-interacting protein 1 (653 aa).

An abolishes microtubules binding when missing region spans residues 1-306; that stretch reads MNAAVVRRTQ…ADKSEKKADI (306 aa). The interval 134–467 is disordered; the sequence is GDSRGRVLRT…DSQNSDNEDD (334 aa). Basic and acidic residues-rich tracts occupy residues 145 to 305, 325 to 335, and 370 to 384; these read KAQE…KKAD, NSLEGRKEDNI, and ENAE…KGDS. The DISC1-interaction domain stretch occupies residues 229 to 653; that stretch reads RAKQDRDRNN…VHSINLSSRR (425 aa). The residue at position 437 (Ser437) is a Phosphoserine. Residues 448–462 show a composition bias toward polar residues; that stretch reads SGKTVSTVIIDSQNS. Residues 533–628 are a coiled coil; sequence AWKKEKDIVS…IKDQQDKICA (96 aa).

This sequence belongs to the TRAF3IP1 family. Component of the IFT complex B, at least composed of IFT20, IFT22, IFT25, IFT27, IFT46, IFT52, TRAF3IP1/IFT54, IFT57, IFT74, IFT80, IFT81, and IFT88. Interacts with IFT88. Interacts with IL13RA1. Binds to microtubules, TRAF3 and DISC1. Interacts with MAP4.

Its subcellular location is the cytoplasm. It is found in the cytoskeleton. The protein localises to the cell projection. The protein resides in the cilium. It localises to the cilium axoneme. Its subcellular location is the cilium basal body. Plays an inhibitory role on IL13 signaling by binding to IL13RA1. Involved in suppression of IL13-induced STAT6 phosphorylation, transcriptional activity and DNA-binding. Recruits TRAF3 and DISC1 to the microtubules. Involved in kidney development and epithelial morphogenesis. Involved in the regulation of microtubule cytoskeleton organization. Is a negative regulator of microtubule stability, acting through the control of MAP4 levels. Involved in ciliogenesis. This chain is TRAF3-interacting protein 1 (Traf3ip1), found in Rattus norvegicus (Rat).